The following is a 292-amino-acid chain: 5,10-methylenetetrahydrofolate reductase (292 aa).

Catalysis depends on Glu-26, which acts as the Proton donor/acceptor. Thr-57 lines the NADH pocket. FAD contacts are provided by Tyr-58, Ala-60, His-86, Arg-116, Gly-117, Asp-118, Ala-130, Tyr-150, His-154, Ala-157, Asp-163, Asn-166, Arg-169, and Lys-170. Asp-118 is a binding site for (6S)-5-methyl-5,6,7,8-tetrahydrofolate. Gln-181 is an NADH binding site. Residues Gln-181, Gln-217, and Arg-277 each contribute to the (6S)-5-methyl-5,6,7,8-tetrahydrofolate site.

This sequence belongs to the methylenetetrahydrofolate reductase family. It depends on FAD as a cofactor.

The catalysed reaction is (6S)-5-methyl-5,6,7,8-tetrahydrofolate + NAD(+) = (6R)-5,10-methylene-5,6,7,8-tetrahydrofolate + NADH + H(+). It participates in one-carbon metabolism; tetrahydrofolate interconversion. The protein operates within amino-acid biosynthesis; L-methionine biosynthesis via de novo pathway. Functionally, catalyzes the NADH-dependent reduction of 5,10-methylenetetrahydrofolate to 5-methyltetrahydrofolate. Is required to provide the methyl group necessary for methionine synthetase to convert homocysteine to methionine; the methyl group is given by 5-methyltetrahydrofolate. The protein is 5,10-methylenetetrahydrofolate reductase (metF) of Haemophilus influenzae (strain ATCC 51907 / DSM 11121 / KW20 / Rd).